Reading from the N-terminus, the 224-residue chain is 7-cyano-7-deazaguanine synthase (224 aa).

10 to 20 (LSGGLDSATVV) is a binding site for ATP. Residues Cys-189, Cys-199, Cys-202, and Cys-205 each coordinate Zn(2+).

Belongs to the QueC family. It depends on Zn(2+) as a cofactor.

It catalyses the reaction 7-carboxy-7-deazaguanine + NH4(+) + ATP = 7-cyano-7-deazaguanine + ADP + phosphate + H2O + H(+). The protein operates within purine metabolism; 7-cyano-7-deazaguanine biosynthesis. Its function is as follows. Catalyzes the ATP-dependent conversion of 7-carboxy-7-deazaguanine (CDG) to 7-cyano-7-deazaguanine (preQ(0)). In Pseudomonas fluorescens (strain SBW25), this protein is 7-cyano-7-deazaguanine synthase.